Consider the following 447-residue polypeptide: Multicopper oxidase mco (447 aa).

Basic and acidic residues predominate over residues 1–25 (MMNMKEDKKNTMDMTNMKHHDERKK). A disordered region spans residues 1-29 (MMNMKEDKKNTMDMTNMKHHDERKKLNSS). Residues histidine 107, histidine 109, histidine 147, histidine 149, histidine 375, histidine 378, histidine 380, histidine 428, cysteine 429, histidine 430, histidine 434, and methionine 439 each contribute to the Cu cation site.

Belongs to the multicopper oxidase family. It depends on Cu cation as a cofactor.

It is found in the cytoplasm. In terms of biological role, may be involved in copper homeostasis and oxidative stress response. In Staphylococcus haemolyticus (strain JCSC1435), this protein is Multicopper oxidase mco (mco).